A 339-amino-acid chain; its full sequence is Ketol-acid reductoisomerase (NADP(+)) (339 aa).

Positions 1–182 constitute a KARI N-terminal Rossmann domain; that stretch reads MRVYYDRDAD…GGGRAGIIET (182 aa). NADP(+) contacts are provided by residues 24–27, Arg-48, Ser-51, Thr-53, and 83–86; these read YGSQ and DELQ. The active site involves His-108. Gly-134 lines the NADP(+) pocket. The KARI C-terminal knotted domain maps to 183-328; the sequence is TFREECETDL…AKLREMMPWI (146 aa). Residues Asp-191, Glu-195, Glu-227, and Glu-231 each coordinate Mg(2+). Ser-252 is a binding site for substrate.

This sequence belongs to the ketol-acid reductoisomerase family. Requires Mg(2+) as cofactor.

It catalyses the reaction (2R)-2,3-dihydroxy-3-methylbutanoate + NADP(+) = (2S)-2-acetolactate + NADPH + H(+). It carries out the reaction (2R,3R)-2,3-dihydroxy-3-methylpentanoate + NADP(+) = (S)-2-ethyl-2-hydroxy-3-oxobutanoate + NADPH + H(+). It functions in the pathway amino-acid biosynthesis; L-isoleucine biosynthesis; L-isoleucine from 2-oxobutanoate: step 2/4. It participates in amino-acid biosynthesis; L-valine biosynthesis; L-valine from pyruvate: step 2/4. In terms of biological role, involved in the biosynthesis of branched-chain amino acids (BCAA). Catalyzes an alkyl-migration followed by a ketol-acid reduction of (S)-2-acetolactate (S2AL) to yield (R)-2,3-dihydroxy-isovalerate. In the isomerase reaction, S2AL is rearranged via a Mg-dependent methyl migration to produce 3-hydroxy-3-methyl-2-ketobutyrate (HMKB). In the reductase reaction, this 2-ketoacid undergoes a metal-dependent reduction by NADPH to yield (R)-2,3-dihydroxy-isovalerate. This is Ketol-acid reductoisomerase (NADP(+)) from Rhodopseudomonas palustris (strain BisA53).